Here is a 76-residue protein sequence, read N- to C-terminus: Accessory gland-specific peptide 57Dc (76 aa).

The signal sequence occupies residues 1 to 20; that stretch reads MHGTHFLILLLLCGVLGSNG.

CAMP-dependent phosphorylation. In terms of tissue distribution, lumen fluid of male accessory glands, becomes seminal fluid.

The protein resides in the secreted. Transferred from male to female during mating and may affect egglaying and behavior after mating. This Drosophila melanogaster (Fruit fly) protein is Accessory gland-specific peptide 57Dc (Mst57Dc).